A 319-amino-acid polypeptide reads, in one-letter code: 4-diphosphocytidyl-2-C-methyl-D-erythritol kinase (319 aa).

Lys-18 is an active-site residue. Position 103 to 113 (103 to 113 (PIGAGLAGGST)) interacts with ATP. Asp-145 is an active-site residue.

The protein belongs to the GHMP kinase family. IspE subfamily.

The enzyme catalyses 4-CDP-2-C-methyl-D-erythritol + ATP = 4-CDP-2-C-methyl-D-erythritol 2-phosphate + ADP + H(+). The protein operates within isoprenoid biosynthesis; isopentenyl diphosphate biosynthesis via DXP pathway; isopentenyl diphosphate from 1-deoxy-D-xylulose 5-phosphate: step 3/6. Functionally, catalyzes the phosphorylation of the position 2 hydroxy group of 4-diphosphocytidyl-2C-methyl-D-erythritol. This chain is 4-diphosphocytidyl-2-C-methyl-D-erythritol kinase, found in Prochlorococcus marinus (strain NATL1A).